The sequence spans 449 residues: Xaa-Pro dipeptidase (449 aa).

Residues Asp-246, Asp-257, His-345, Glu-390, and Glu-429 each contribute to the Mn(2+) site.

The protein belongs to the peptidase M24B family. Bacterial-type prolidase subfamily. It depends on Mn(2+) as a cofactor.

The catalysed reaction is Xaa-L-Pro dipeptide + H2O = an L-alpha-amino acid + L-proline. Splits dipeptides with a prolyl residue in the C-terminal position. The polypeptide is Xaa-Pro dipeptidase (Yersinia enterocolitica serotype O:8 / biotype 1B (strain NCTC 13174 / 8081)).